The primary structure comprises 795 residues: Phenylalanine--tRNA ligase beta subunit (795 aa).

Residues 39–148 (AGDFSGVVVG…QNAPVGTNLR (110 aa)) enclose the tRNA-binding domain. Residues 401-476 (PKLNQVSLRR…RIYGYNSIPN (76 aa)) form the B5 domain. Mg(2+)-binding residues include D454, D460, E463, and E464. The FDX-ACB domain occupies 701 to 794 (SRFPANRRDL…LKQRFNAYLR (94 aa)).

The protein belongs to the phenylalanyl-tRNA synthetase beta subunit family. Type 1 subfamily. In terms of assembly, tetramer of two alpha and two beta subunits. Mg(2+) serves as cofactor.

It localises to the cytoplasm. The catalysed reaction is tRNA(Phe) + L-phenylalanine + ATP = L-phenylalanyl-tRNA(Phe) + AMP + diphosphate + H(+). The chain is Phenylalanine--tRNA ligase beta subunit (pheT) from Pasteurella multocida (strain Pm70).